Reading from the N-terminus, the 292-residue chain is Probable 2-(5''-triphosphoribosyl)-3'-dephosphocoenzyme-A synthase (292 aa).

It belongs to the CitG/MdcB family.

It catalyses the reaction 3'-dephospho-CoA + ATP = 2'-(5''-triphospho-alpha-D-ribosyl)-3'-dephospho-CoA + adenine. This Shigella sonnei (strain Ss046) protein is Probable 2-(5''-triphosphoribosyl)-3'-dephosphocoenzyme-A synthase.